A 143-amino-acid polypeptide reads, in one-letter code: Transcriptional regulator MraZ (143 aa).

SpoVT-AbrB domains are found at residues 5-47 (EYEH…TLEE) and 76-119 (AVEV…DRAS).

This sequence belongs to the MraZ family. In terms of assembly, forms oligomers.

It is found in the cytoplasm. Its subcellular location is the nucleoid. The polypeptide is Transcriptional regulator MraZ (Staphylococcus carnosus (strain TM300)).